Consider the following 115-residue polypeptide: Transmembrane protein 14C (115 aa).

The next 4 membrane-spanning stretches (helical) occupy residues 8–28 (LVPL…GGII), 33–53 (AGSV…GLGA), 63–83 (VWVF…RFYN), and 88–108 (MPAG…VAKI).

The protein belongs to the TMEM14 family.

The protein resides in the mitochondrion membrane. Required for normal heme biosynthesis. The sequence is that of Transmembrane protein 14C (Tmem14c) from Rattus norvegicus (Rat).